We begin with the raw amino-acid sequence, 320 residues long: Probable 5-dehydro-4-deoxyglucarate dehydratase (320 aa).

This sequence belongs to the DapA family.

The catalysed reaction is 5-dehydro-4-deoxy-D-glucarate + H(+) = 2,5-dioxopentanoate + CO2 + H2O. It participates in carbohydrate acid metabolism; D-glucarate degradation; 2,5-dioxopentanoate from D-glucarate: step 2/2. This is Probable 5-dehydro-4-deoxyglucarate dehydratase from Streptomyces griseus subsp. griseus (strain JCM 4626 / CBS 651.72 / NBRC 13350 / KCC S-0626 / ISP 5235).